We begin with the raw amino-acid sequence, 318 residues long: Glycerol 2-dehydrogenase (NADP(+)) (318 aa).

The active-site Proton donor is Y52. H115 contacts substrate. 217 to 277 (SPLGSQNQVP…SSTPSRIESN (61 aa)) contributes to the NADP(+) binding site.

It belongs to the aldo/keto reductase family.

The enzyme catalyses glycerol + NADP(+) = dihydroxyacetone + NADPH + H(+). Functionally, glycerol oxidoreductase probably involved in glycerol synthesis. The polypeptide is Glycerol 2-dehydrogenase (NADP(+)) (gld2) (Hypocrea jecorina (Trichoderma reesei)).